A 132-amino-acid chain; its full sequence is Small ribosomal subunit protein eS6 (132 aa).

Belongs to the eukaryotic ribosomal protein eS6 family.

This is Small ribosomal subunit protein eS6 from Methanosphaerula palustris (strain ATCC BAA-1556 / DSM 19958 / E1-9c).